Consider the following 217-residue polypeptide: MRLNIAIDGPAGAGKSTIAKLVAKKFRLMYINTGAMYRAVTLMAMRQNIRANDVKKLCDLIESLSMHFENDKLIVNGEDVSEEILLPKTSQNVSDYASVLEVREKLVYLQKKMAGRYDVVMDGRDIGTVVLNDAPFKFYLTATPEERAKRRYKELSAKNIKVCYDDILNDIIRRDYIDSNREVNPLTKAYDAVEIDSSNMCIEEVVDYIVQYISKKI.

Residue 9-17 coordinates ATP; the sequence is GPAGAGKST.

The protein belongs to the cytidylate kinase family. Type 1 subfamily.

The protein resides in the cytoplasm. The catalysed reaction is CMP + ATP = CDP + ADP. It carries out the reaction dCMP + ATP = dCDP + ADP. The chain is Cytidylate kinase from Clostridium acetobutylicum (strain ATCC 824 / DSM 792 / JCM 1419 / IAM 19013 / LMG 5710 / NBRC 13948 / NRRL B-527 / VKM B-1787 / 2291 / W).